The primary structure comprises 209 residues: Molybdenum cofactor guanylyltransferase (209 aa).

Residues 16–18 (LAG), Lys28, Asn56, Asp69, and Asp103 each bind GTP. Residue Asp103 participates in Mg(2+) binding.

It belongs to the MobA family. As to quaternary structure, monomer. Mg(2+) is required as a cofactor.

It localises to the cytoplasm. It carries out the reaction Mo-molybdopterin + GTP + H(+) = Mo-molybdopterin guanine dinucleotide + diphosphate. Its function is as follows. Transfers a GMP moiety from GTP to Mo-molybdopterin (Mo-MPT) cofactor (Moco or molybdenum cofactor) to form Mo-molybdopterin guanine dinucleotide (Mo-MGD) cofactor. This chain is Molybdenum cofactor guanylyltransferase, found in Rhizobium johnstonii (strain DSM 114642 / LMG 32736 / 3841) (Rhizobium leguminosarum bv. viciae).